We begin with the raw amino-acid sequence, 440 residues long: Stromal membrane-associated protein 1 (440 aa).

The 126-residue stretch at 18–143 folds into the Arf-GAP domain; the sequence is QLILSKLLRE…IAITNKEKEK (126 aa). A C4-type zinc finger spans residues 33 to 56; the sequence is CADCEAKGPRWASWNIGVFICIRC. Basic and acidic residues-rich tracts occupy residues 140-158 and 165-178; these read EKEKKKDEKKREKEPEKPA and KLPKKEEQQLEPKK. 2 disordered regions span residues 140–211 and 410–440; these read EKEK…PATA and NASAGFGQPPSTTAGWSGSSSGQTLSTQLWK. Positions 192–196 match the Interaction with clathrin heavy chains motif; sequence LLGLD. A compositionally biased stretch (low complexity) spans 420–440; sequence STTAGWSGSSSGQTLSTQLWK.

In terms of assembly, interacts with ARF6. Interacts with clathrin heavy chains via the clathrin box-like motif. In terms of tissue distribution, detected in adult brain, lung, heart, liver, ovary and bone marrow. Detected in stromal cells of the red pulp of adult spleen.

It is found in the cell membrane. Its function is as follows. GTPase activating protein that acts on ARF6. Plays a role in clathrin-dependent endocytosis. May play a role in erythropoiesis. This chain is Stromal membrane-associated protein 1 (Smap1), found in Mus musculus (Mouse).